The sequence spans 341 residues: MAFRKEELSQTLYENESEQSSETKELMLNNEESLSDWRNYFDEKLTIPGESGALNGTINGYLTLPQPDGCLLVLQHGAGSSAMSFAPVTQELLSNSDNKVGFLALDLRAHGETTLEPESDMSLETLSKDFTHAVSYVQRMFELDEKIILVGHSLGGAICAYCAFQKTIPNTSGLVVIDVVEGTAMEALGFMKTYLSNRPTSFKSIDDAISWHIKTLVTRNRLSACITVPSLLVQQEDGTFVWRTDLYKTSPYWMDWFKGLSDKFLRAPYGRMLIVAGTDRLDKTLTIGQMQGKYQLEILPETGHFVHEDVPAKISSLLLNFWHRNQPLVLPPKVGATPVLQ.

The tract at residues 1-24 is disordered; the sequence is MAFRKEELSQTLYENESEQSSETK. A compositionally biased stretch (polar residues) spans 9-20; that stretch reads SQTLYENESEQS. Active-site residues include serine 153, aspartate 178, and histidine 304.

This sequence belongs to the AB hydrolase superfamily.

It carries out the reaction [phosphatase 2A protein]-C-terminal L-leucine methyl ester + H2O = [phosphatase 2A protein]-C-terminal L-leucine + methanol + H(+). Functionally, demethylates proteins that have been reversibly carboxymethylated. Demethylates the phosphatase PP2A catalytic subunit. This chain is Protein phosphatase methylesterase 1 (ppe1), found in Schizosaccharomyces pombe (strain 972 / ATCC 24843) (Fission yeast).